A 128-amino-acid polypeptide reads, in one-letter code: Glycine cleavage system H protein 2 (128 aa).

The region spanning 24–105 (TVTVGISDHA…PYSAWIFKVK (82 aa)) is the Lipoyl-binding domain. The residue at position 65 (K65) is an N6-lipoyllysine.

This sequence belongs to the GcvH family. In terms of assembly, the glycine cleavage system is composed of four proteins: P, T, L and H. (R)-lipoate is required as a cofactor.

The glycine cleavage system catalyzes the degradation of glycine. The H protein shuttles the methylamine group of glycine from the P protein to the T protein. The chain is Glycine cleavage system H protein 2 from Pseudomonas syringae pv. tomato (strain ATCC BAA-871 / DC3000).